Reading from the N-terminus, the 500-residue chain is MKKYIVALDQGTTSSRAIIFDKEQNIIGVSQKEFNQIYPREGWVEHDPMEIWATQYSVLQEVMAKCNITQENIAAIGITNQRETTIVWDKNTGVPIYNAIVWQCRRTADICDELKERDGLVDYIRENTGLVLDAYFSGTKIKWILDNVEGAREKAEKGELLFGTVDSWLVWKLTNGKVHVTDYTNASRTMIFNIKNLQWDERMLKELDIPRSMLPEVKNSSEIYGYANLGAKGGIRVPIAGIAGDQQAALFGQAAFNKGDVKNTYGTGCFLLMNTGEELVKSKSGLLTTIAIGLHGKVQYALEGSVFVGGAVIQWLRDELRIISDSSDTEYFATKVEDNGGVYVVPAFVGLGAPYWDMYARGTIVGLTRGTNRNHIIRAALESIAYQTRDVLEAMINDVGYDINCIKVDGGASRNNFLMQFQSDLVGKKVIKPIITETTALGAAYLAGLAVGYWSDKEEIAKLWFASEEFEPTISEERRNKYHKKWKKAVERSKGWALED.

Residue Thr-12 participates in ADP binding. Thr-12, Thr-13, and Ser-14 together coordinate ATP. Thr-12 contacts sn-glycerol 3-phosphate. Arg-16 serves as a coordination point for ADP. Sn-glycerol 3-phosphate is bound by residues Arg-82, Glu-83, Tyr-135, and Asp-245. Glycerol-binding residues include Arg-82, Glu-83, Tyr-135, Asp-245, and Gln-246. ADP-binding residues include Thr-267 and Gly-310. Thr-267, Gly-310, Gln-314, and Gly-411 together coordinate ATP. The ADP site is built by Gly-411 and Asn-415.

Belongs to the FGGY kinase family. Homotetramer and homodimer (in equilibrium).

The catalysed reaction is glycerol + ATP = sn-glycerol 3-phosphate + ADP + H(+). It participates in polyol metabolism; glycerol degradation via glycerol kinase pathway; sn-glycerol 3-phosphate from glycerol: step 1/1. Its activity is regulated as follows. Activated by phosphorylation and inhibited by fructose 1,6-bisphosphate (FBP). In terms of biological role, key enzyme in the regulation of glycerol uptake and metabolism. Catalyzes the phosphorylation of glycerol to yield sn-glycerol 3-phosphate. The polypeptide is Glycerol kinase (Clostridium perfringens (strain 13 / Type A)).